Here is a 111-residue protein sequence, read N- to C-terminus: Nucleoid-associated protein Clim_0875 (111 aa).

This sequence belongs to the YbaB/EbfC family. In terms of assembly, homodimer.

The protein resides in the cytoplasm. It localises to the nucleoid. Its function is as follows. Binds to DNA and alters its conformation. May be involved in regulation of gene expression, nucleoid organization and DNA protection. The protein is Nucleoid-associated protein Clim_0875 of Chlorobium limicola (strain DSM 245 / NBRC 103803 / 6330).